The sequence spans 254 residues: Phosphoribosylaminoimidazole-succinocarboxamide synthase (254 aa).

This sequence belongs to the SAICAR synthetase family.

It catalyses the reaction 5-amino-1-(5-phospho-D-ribosyl)imidazole-4-carboxylate + L-aspartate + ATP = (2S)-2-[5-amino-1-(5-phospho-beta-D-ribosyl)imidazole-4-carboxamido]succinate + ADP + phosphate + 2 H(+). The protein operates within purine metabolism; IMP biosynthesis via de novo pathway; 5-amino-1-(5-phospho-D-ribosyl)imidazole-4-carboxamide from 5-amino-1-(5-phospho-D-ribosyl)imidazole-4-carboxylate: step 1/2. This Bartonella quintana (strain Toulouse) (Rochalimaea quintana) protein is Phosphoribosylaminoimidazole-succinocarboxamide synthase.